Here is a 487-residue protein sequence, read N- to C-terminus: MDLDEAFLYVGEFGWCQKRLTGFLTLLQIYVACQSMLIVLVGAVPEYLIDNEDISTSKEDYIKHLHDANNFTSIVSEWHLIKHEAYKVNLASSLFFAGLLIGNVFFGPLSDKLGRRPVYLSGLFFDIIFGYFTALAPSYEVFAVSRFFVGVMNGGMALVSFVLTQEYVGKSYWALTGSLTNLIFAVGIAFYALLGFYIRNWRTLAFVANSPGIFFLLLSFVLPESPRWLYSRGYTAEAEAVLESMAAGNGVERPVVRLKSCPGTTANSAHSVFDLVKYGVLRWRTILLMYIWYVCSLVYYGLTLNAGELKGNLYLNVALYGLVEVPAFPLCLYFIEKSWSGRRRATAGFLVFAGFACIFTIFVPETNGDFINPTVLALFGKLSVSAAFNVVYIYTSELYPTVVRNAGLGVCAMACRFGGILSPFIPAMKSFNPSMPFVAFGISGISAGILSLLLPETRNKPIAETIEDLQSPAYQLLSRGNEVLAST.

Residues 23-43 traverse the membrane as a helical segment; it reads FLTLLQIYVACQSMLIVLVGA. N-linked (GlcNAc...) asparagine glycosylation is present at N70. A run of 11 helical transmembrane segments spans residues 90–110, 117–137, 141–161, 178–198, 203–223, 286–306, 315–335, 345–365, 374–394, 408–428, and 435–455; these read LASS…GPLS, PVYL…ALAP, VFAV…LVSF, SLTN…GFYI, TLAF…FVLP, ILLM…TLNA, LNVA…LYFI, ATAG…FVPE, TVLA…VYIY, LGVC…IPAM, and MPFV…LLLP.

This sequence belongs to the major facilitator (TC 2.A.1) superfamily. Organic cation transporter (TC 2.A.1.19) family.

The protein localises to the membrane. In terms of biological role, probably transports organic cations. The protein is Solute carrier family 22 member 15-like (slc22a15b) of Xenopus laevis (African clawed frog).